The sequence spans 118 residues: MSTPNSYDDEELEELLRRKAAQEQKRIEEERKRKAELESQKESILRVILTPEARQRLTNIKLVKPEFAESLENQLIALAQSGRIKIPITDEELKQILEQISQQNRRDFKIQIRERGWK.

This sequence belongs to the PDCD5 family.

In Saccharolobus solfataricus (strain ATCC 35092 / DSM 1617 / JCM 11322 / P2) (Sulfolobus solfataricus), this protein is DNA-binding protein SSO0352.